The chain runs to 507 residues: AMSH-like ubiquitin thioesterase 1 (507 aa).

Residues 333 to 463 (LHIATSMMDT…IFRLTTPGGM (131 aa)) enclose the MPN domain. Positions 411, 413, 424, 426, 469, 475, and 477 each coordinate Zn(2+). The JAMM motif motif lies at 411 to 424 (HTHPTQSCFMSSID).

The protein belongs to the peptidase M67C family. Zn(2+) serves as cofactor.

The protein resides in the membrane. The protein localises to the cytoplasm. In terms of biological role, zinc metalloprotease that cleaves 'Lys-48'- and 'Lys-63'-linked polyubiquitin chains. The chain is AMSH-like ubiquitin thioesterase 1 (AMSH1) from Arabidopsis thaliana (Mouse-ear cress).